Here is a 230-residue protein sequence, read N- to C-terminus: Ribosome maturation factor RimM (230 aa).

A PRC barrel domain is found at 149 to 230; that stretch reads ADEFYWVDLI…RVVVDWEADY (82 aa).

The protein belongs to the RimM family. Binds ribosomal protein uS19.

Its subcellular location is the cytoplasm. An accessory protein needed during the final step in the assembly of 30S ribosomal subunit, possibly for assembly of the head region. Essential for efficient processing of 16S rRNA. May be needed both before and after RbfA during the maturation of 16S rRNA. It has affinity for free ribosomal 30S subunits but not for 70S ribosomes. The protein is Ribosome maturation factor RimM of Burkholderia mallei (strain NCTC 10229).